The following is a 78-amino-acid chain: Conotoxin ArMKLT2-0313 (78 aa).

A signal peptide spans 1-22; that stretch reads MKLTCVLIIAVLCLTVCQLITA. Positions 23 to 47 are excised as a propeptide; that stretch reads DYLRDKQKYRSVRLRDGMLNFKGSR. Glutamine 48 bears the Pyrrolidone carboxylic acid mark. 3 disulfides stabilise this stretch: cysteine 49-cysteine 62, cysteine 56-cysteine 67, and cysteine 61-cysteine 75.

This sequence belongs to the conotoxin O1 superfamily. As to expression, expressed by the venom duct.

Its subcellular location is the secreted. The polypeptide is Conotoxin ArMKLT2-0313 (Conus arenatus (Sand-dusted cone)).